The chain runs to 421 residues: UDP-N-acetylglucosamine 1-carboxyvinyltransferase 2 (421 aa).

Position 22-23 (22-23) interacts with phosphoenolpyruvate; it reads KN. Arg-95 contacts UDP-N-acetyl-alpha-D-glucosamine. Cys-119 serves as the catalytic Proton donor. Position 119 is a 2-(S-cysteinyl)pyruvic acid O-phosphothioketal (Cys-119). Residues 124–128, Asp-308, and Val-330 each bind UDP-N-acetyl-alpha-D-glucosamine; that span reads RPIEQ.

The protein belongs to the EPSP synthase family. MurA subfamily.

It localises to the cytoplasm. The enzyme catalyses phosphoenolpyruvate + UDP-N-acetyl-alpha-D-glucosamine = UDP-N-acetyl-3-O-(1-carboxyvinyl)-alpha-D-glucosamine + phosphate. It participates in cell wall biogenesis; peptidoglycan biosynthesis. Its function is as follows. Cell wall formation. Adds enolpyruvyl to UDP-N-acetylglucosamine. This chain is UDP-N-acetylglucosamine 1-carboxyvinyltransferase 2, found in Staphylococcus haemolyticus (strain JCSC1435).